A 290-amino-acid chain; its full sequence is Arylamine N-acetyltransferase 2 (290 aa).

The Acyl-thioester intermediate role is filled by Cys-68. Positions 103 and 104 each coordinate CoA. A substrate-binding site is contributed by Ile-106–His-107. Active-site residues include His-107 and Asp-122. Residue Tyr-208 participates in CoA binding.

Belongs to the arylamine N-acetyltransferase family.

The protein resides in the cytoplasm. The enzyme catalyses an arylamine + acetyl-CoA = an N-acetylarylamine + CoA. The catalysed reaction is an N-hydroxyarylamine + acetyl-CoA = an N-acetoxyarylamine + CoA. Functionally, catalyzes the N- or O-acetylation of various arylamine and heterocyclic amine substrates, and participates in the detoxification of a plethora of hydrazine and arylamine drugs. This chain is Arylamine N-acetyltransferase 2 (NAT2), found in Mesocricetus auratus (Golden hamster).